The chain runs to 800 residues: Cell division cycle 5-like protein (800 aa).

HTH myb-type domains follow at residues 1 to 56 (MRNV…DPSI) and 57 to 106 (KKTE…DEVQ). 2 DNA-binding regions (H-T-H motif) span residues 29–52 (WARI…HEWL) and 80–102 (WKTI…NRLL). Disordered regions lie at residues 109–186 (QDNE…KRKF), 334–378 (YEKL…NIRT), 399–445 (QTPL…KQSL), and 571–610 (NKTF…NDND). Over residues 113–122 (NGGGSGGGGT) the composition is skewed to gly residues. Positions 133-142 (NDPRRLRMGD) are enriched in basic and acidic residues. Gly residues predominate over residues 340 to 351 (SGSGGGSGGVGV). A compositionally biased stretch (low complexity) spans 361–376 (TASISSTAANNNTNNI). 2 stretches are compositionally biased toward polar residues: residues 409-445 (NVSQ…KQSL) and 573-584 (TFPNDSITPSST). Basic and acidic residues predominate over residues 592–601 (DNHHHHHDDI). Coiled-coil stretches lie at residues 621 to 700 (NTEL…KIKN) and 748 to 800 (VALK…LSIF).

It belongs to the CEF1 family. As to quaternary structure, component of the precatalytic, catalytic and postcatalytic spliceosome complexes.

It is found in the nucleus. The protein resides in the cytoplasm. DNA-binding protein involved in cell cycle control. May act as a transcription activator. Plays a role in pre-mRNA splicing as core component of precatalytic, catalytic and postcatalytic spliceosomal complexes. May also play a role in the response to DNA damage (DDR). The sequence is that of Cell division cycle 5-like protein (cdc5l) from Dictyostelium discoideum (Social amoeba).